A 293-amino-acid chain; its full sequence is Proline iminopeptidase (293 aa).

An AB hydrolase-1 domain is found at 28–277; sequence KPLVLLHGGP…YSRHMPFVEE (250 aa). The active-site Nucleophile is the Ser-104. Asp-244 is an active-site residue. His-271 functions as the Proton donor in the catalytic mechanism.

The protein belongs to the peptidase S33 family.

The enzyme catalyses Release of N-terminal proline from a peptide.. In terms of biological role, releases the N-terminal proline from various substrates. This chain is Proline iminopeptidase, found in Clostridioides difficile (strain 630) (Peptoclostridium difficile).